The sequence spans 237 residues: tRNA (guanine-N(7)-)-methyltransferase (237 aa).

Residues E68, E93, D120, and D143 each coordinate S-adenosyl-L-methionine. D143 is an active-site residue. Substrate-binding positions include K147, D179, and 216–219 (TKFE).

It belongs to the class I-like SAM-binding methyltransferase superfamily. TrmB family.

The enzyme catalyses guanosine(46) in tRNA + S-adenosyl-L-methionine = N(7)-methylguanosine(46) in tRNA + S-adenosyl-L-homocysteine. It participates in tRNA modification; N(7)-methylguanine-tRNA biosynthesis. Functionally, catalyzes the formation of N(7)-methylguanine at position 46 (m7G46) in tRNA. This chain is tRNA (guanine-N(7)-)-methyltransferase, found in Shewanella piezotolerans (strain WP3 / JCM 13877).